Reading from the N-terminus, the 263-residue chain is Polyglutamine-binding protein 1 (263 aa).

The 35-residue stretch at 46-80 (EGLPPSWYKVFDPSCGLPYYWNVETDLVSWLSPHD) folds into the WW domain. The segment at 94-263 (NNNADAEDKS…AEASRTKQQD (170 aa)) is disordered. Over residues 99 to 173 (AEDKSDRNLE…DKADREEGKD (75 aa)) the composition is skewed to basic and acidic residues. A 1-1; approximate repeat occupies 104-110 (DRNLEKV). The tract at residues 104–138 (DRNLEKVDRNHEKSDRSHEKPDRSHEKADRNHEKN) is 5 X 7 AA approximate tandem repeats of D-R-[NS]-H-E-K-S. One copy of the 1-2 repeat lies at 111-117 (DRNHEKS). One copy of the 1-3; approximate repeat lies at 118 to 124 (DRSHEKP). One copy of the 1-4; approximate repeat lies at 125-131 (DRSHEKA). The 1-5; approximate repeat unit spans residues 132–138 (DRNHEKN). 9 repeat units span residues 139–140 (DR), 141–142 (ER), 143–144 (ER), 150–151 (DR), 152–153 (ER), 154–155 (DR), 156–157 (DR), 158–159 (ER), and 160–161 (ER). A 3 X 2 AA tandem repeats of [DE]-R region spans residues 139-144 (DRERER). The segment at 150–161 (DRERDRDRERER) is 6 X 2 AA tandem repeats of [DE]-R. Residues 243-253 (YPSPGAVLRAN) form an important for interaction with TXNL4A region. Position 245 is a phosphoserine (Ser245).

In terms of assembly, interacts with POU3F2/Brn-2, ATXN1, TXNL4A, HTT and AR. Interaction with ATXN1 correlates positively with the length of the polyglutamine tract. Interacts with RNA polymerase II large subunit in a phosphorylation-dependent manner. Forms a ternary complex with ATXN1 mutant and phosphorylated RNA polymerase II. Interacts (via C-terminus) with TXNL4A and CD2BP2. Interacts (via WW domain) with ATN1 and SF3B1, and may interact with additional splice factors. Interacts (via WW domain) with WBP11; Leading to reduce interaction between PQBP1 and TXNL4A. Interacts with CAPRIN1. Interacts with DDX1. Interacts with SFPQ. Interacts with KHSRP. As to expression, detected in brain cortex and hippocampus neurons (at protein level). Expressed in brain with high level in cerebellar cortex, hippocampus and olfactory bulb.

The protein localises to the nucleus. The protein resides in the nucleus speckle. It is found in the cytoplasmic granule. Intrinsically disordered protein that acts as a scaffold, and which is involved in different processes, such as pre-mRNA splicing, transcription regulation, innate immunity and neuron development. Interacts with splicing-related factors via the intrinsically disordered region and regulates alternative splicing of target pre-mRNA species. May suppress the ability of POU3F2 to transactivate the DRD1 gene in a POU3F2 dependent manner. Can activate transcription directly or via association with the transcription machinery. May be involved in ATXN1 mutant-induced cell death. The interaction with ATXN1 mutant reduces levels of phosphorylated RNA polymerase II large subunit. Involved in the assembly of cytoplasmic stress granule, possibly by participating in the transport of neuronal RNA granules. Also acts as an innate immune sensor of infection by retroviruses, by detecting the presence of reverse-transcribed DNA in the cytosol. Directly binds retroviral reverse-transcribed DNA in the cytosol and interacts with CGAS, leading to activate the cGAS-STING signaling pathway, triggering type-I interferon production. The protein is Polyglutamine-binding protein 1 (Pqbp1) of Mus musculus (Mouse).